The chain runs to 196 residues: Imidazole glycerol phosphate synthase subunit HisH (196 aa).

The region spanning 2 to 196 (DVVILDTGCA…AQLMKNFLEM (195 aa)) is the Glutamine amidotransferase type-1 domain. Catalysis depends on Cys77, which acts as the Nucleophile. Residues His178 and Glu180 contribute to the active site.

In terms of assembly, heterodimer of HisH and HisF.

The protein resides in the cytoplasm. The catalysed reaction is 5-[(5-phospho-1-deoxy-D-ribulos-1-ylimino)methylamino]-1-(5-phospho-beta-D-ribosyl)imidazole-4-carboxamide + L-glutamine = D-erythro-1-(imidazol-4-yl)glycerol 3-phosphate + 5-amino-1-(5-phospho-beta-D-ribosyl)imidazole-4-carboxamide + L-glutamate + H(+). It carries out the reaction L-glutamine + H2O = L-glutamate + NH4(+). It participates in amino-acid biosynthesis; L-histidine biosynthesis; L-histidine from 5-phospho-alpha-D-ribose 1-diphosphate: step 5/9. IGPS catalyzes the conversion of PRFAR and glutamine to IGP, AICAR and glutamate. The HisH subunit catalyzes the hydrolysis of glutamine to glutamate and ammonia as part of the synthesis of IGP and AICAR. The resulting ammonia molecule is channeled to the active site of HisF. The polypeptide is Imidazole glycerol phosphate synthase subunit HisH (Yersinia pestis).